A 149-amino-acid chain; its full sequence is Large ribosomal subunit protein bL9 (149 aa).

This sequence belongs to the bacterial ribosomal protein bL9 family.

In terms of biological role, binds to the 23S rRNA. The protein is Large ribosomal subunit protein bL9 of Amoebophilus asiaticus (strain 5a2).